The sequence spans 284 residues: Bifunctional protein FolD (284 aa).

NADP(+)-binding positions include 166–168, serine 191, and isoleucine 232; that span reads GAS.

It belongs to the tetrahydrofolate dehydrogenase/cyclohydrolase family. Homodimer.

The catalysed reaction is (6R)-5,10-methylene-5,6,7,8-tetrahydrofolate + NADP(+) = (6R)-5,10-methenyltetrahydrofolate + NADPH. It catalyses the reaction (6R)-5,10-methenyltetrahydrofolate + H2O = (6R)-10-formyltetrahydrofolate + H(+). Its pathway is one-carbon metabolism; tetrahydrofolate interconversion. Functionally, catalyzes the oxidation of 5,10-methylenetetrahydrofolate to 5,10-methenyltetrahydrofolate and then the hydrolysis of 5,10-methenyltetrahydrofolate to 10-formyltetrahydrofolate. This Neisseria meningitidis serogroup A / serotype 4A (strain DSM 15465 / Z2491) protein is Bifunctional protein FolD.